Here is a 137-residue protein sequence, read N- to C-terminus: Large ribosomal subunit protein eL28 (137 aa).

S2 bears the N-acetylserine mark. Glycyl lysine isopeptide (Lys-Gly) (interchain with G-Cter in SUMO2) cross-links involve residues K58 and K65. S115 carries the phosphoserine modification.

It belongs to the eukaryotic ribosomal protein eL28 family. As to quaternary structure, component of the large ribosomal subunit.

The protein resides in the cytoplasm. Functionally, component of the large ribosomal subunit. The ribosome is a large ribonucleoprotein complex responsible for the synthesis of proteins in the cell. This is Large ribosomal subunit protein eL28 (Rpl28) from Rattus norvegicus (Rat).